A 182-amino-acid chain; its full sequence is ADP-ribosylation factor 1 (182 aa).

Residue Gly2 is the site of N-myristoyl glycine attachment. Positions 3-16 (NVFANLFKGLFGKK) are important for the stable binding to the membranes. Residues 24–32 (GLDAAGKTT), 126–129 (NKQD), and Ala160 each bind GTP.

Belongs to the small GTPase superfamily. Arf family.

It is found in the golgi apparatus membrane. It localises to the cytoplasm. The protein resides in the cytosol. It catalyses the reaction GTP + H2O = GDP + phosphate + H(+). Alternates between an inactive GDP-bound form and an active GTP-bound form. Activated by a guanine nucleotide-exchange factor (GEF) and inactivated by GTPase-activating protein (GAP). Functionally, small GTPase involved in protein trafficking between different compartments. Modulates vesicle budding and uncoating within the Golgi complex. In its GTP-bound form, triggers the recruitment of coatomer proteins to the Golgi membrane. The hydrolysis of ARF1-bound GTP, which is mediated by ARFGAPs proteins, is required for dissociation of coat proteins from Golgi membranes and vesicles. Has a role in eye development. Required for cleavage furrow ingression in embryonic cells. The polypeptide is ADP-ribosylation factor 1 (Drosophila melanogaster (Fruit fly)).